We begin with the raw amino-acid sequence, 400 residues long: Subtilisin-like protease 1 (400 aa).

The first 20 residues, 1–20, serve as a signal peptide directing secretion; that stretch reads MKFSQSLIALAACFLPLIAA. Positions 21–119 are excised as a propeptide; it reads APVEAQHAKI…IEMDGKVQAN (99 aa). The Inhibitor I9 domain maps to 42 to 117; the sequence is SYIVVFNKGV…AWIEMDGKVQ (76 aa). The N-linked (GlcNAc...) asparagine glycan is linked to asparagine 82. Positions 128–400 constitute a Peptidase S8 domain; that stretch reads TWGLGRISHK…NLIAYNGNGA (273 aa). Catalysis depends on charge relay system residues aspartate 160, histidine 192, and serine 345.

It belongs to the peptidase S8 family.

The protein resides in the secreted. Its function is as follows. Major secreted subtilisin-like serine endopeptidase. Mediates the degradation of collagen, the major structural protein in the mammalian host. Degrades the nonhelical regions of collagen that function in the cross-linking of the helical components. May function as virulence factor involved in epidermal wing necrosis observed in white nose syndrome (WNS) in bats. This chain is Subtilisin-like protease 1, found in Pseudogymnoascus destructans (strain ATCC MYA-4855 / 20631-21) (Bat white-nose syndrome fungus).